Consider the following 417-residue polypeptide: UDP-N-acetylglucosamine 1-carboxyvinyltransferase (417 aa).

23–24 (KN) is a phosphoenolpyruvate binding site. Position 93 (Arg93) interacts with UDP-N-acetyl-alpha-D-glucosamine. Asp117 acts as the Proton donor in catalysis. The UDP-N-acetyl-alpha-D-glucosamine site is built by Asp305 and Val327.

This sequence belongs to the EPSP synthase family. MurA subfamily.

The protein resides in the cytoplasm. The enzyme catalyses phosphoenolpyruvate + UDP-N-acetyl-alpha-D-glucosamine = UDP-N-acetyl-3-O-(1-carboxyvinyl)-alpha-D-glucosamine + phosphate. Its pathway is cell wall biogenesis; peptidoglycan biosynthesis. Cell wall formation. Adds enolpyruvyl to UDP-N-acetylglucosamine. The chain is UDP-N-acetylglucosamine 1-carboxyvinyltransferase from Mycolicibacterium paratuberculosis (strain ATCC BAA-968 / K-10) (Mycobacterium paratuberculosis).